Here is a 663-residue protein sequence, read N- to C-terminus: MSSKAVVFAYHDIGCAGIEALLNTGYDIAAVFTHADDPKENNFYGSVAQLCARNGIPVHAPEDANHPLWIERIAKLNPDYLFSFYYRNLLSEPLLATARKGAFNLHGSLLPKYRGRAPANWVLVNGETETGVTLHRMVKRADAGAILAQQKVIIERSDTGLTLHAKLRDAASNLLRDALPQLAQGKLAETAQDESQATYFGRRTAADGKLEWKKPAEELFNLVRAVTQPYPGAFCAVGEHKLVVWQADVVKGNEGLAPGRVISVNPLRIACGEDSLVIKFGQRNDNGLYLAGPSLANELGLVDGSVLRGAESGRKPRRTRVLILGVNGFIGNHLSERLLRDDRYEVYGLDIGSDAIERLRSHPNFHYVEGDISIHTEWIEYHIKKCDVVLPLVAIATPIEYTRNPLRVFELDFEENLKLVRYCVKYNKRVIFPSTSEVYGMCQDQYFDEDTSNLVVGPVNKQRWIYSVSKQLLDRVIWAYGAKGLNFTLFRPFNWMGPRLDRLDSARIGSSRAITQLILNLVEGTPIRLFDGGEQKRCFTDIADGIEALARIIDNDNDACNGQIINIGNPENEASIRQLGEELLRQFEAHPLRGNFPPFAGFRDVESKAFYGTGYQDVAHRKPSIENAKRLLNWEPTVEMSETIGNTLDFFLREAMLEIADKK.

The tract at residues 1–307 (MSSKAVVFAY…ELGLVDGSVL (307 aa)) is formyltransferase ArnAFT. The active-site Proton donor; for formyltransferase activity is the His106. Residues Arg116 and 138 to 142 (VKRAD) contribute to the (6R)-10-formyltetrahydrofolate site. Residues 317-663 (RRTRVLILGV…EAMLEIADKK (347 aa)) are dehydrogenase ArnADH. NAD(+) is bound by residues Asp350 and 371-372 (DI). UDP-alpha-D-glucuronate-binding positions include Ala396, Tyr401, and 435–436 (TS). Glu437 acts as the Proton acceptor; for decarboxylase activity in catalysis. Residues Arg463, Asn494, 528-537 (RLFDGGEQKR), and Tyr615 each bind UDP-alpha-D-glucuronate. Residue Arg621 is the Proton donor; for decarboxylase activity of the active site.

This sequence in the N-terminal section; belongs to the Fmt family. UDP-L-Ara4N formyltransferase subfamily. In the C-terminal section; belongs to the NAD(P)-dependent epimerase/dehydratase family. UDP-glucuronic acid decarboxylase subfamily. Homohexamer, formed by a dimer of trimers.

The catalysed reaction is UDP-alpha-D-glucuronate + NAD(+) = UDP-beta-L-threo-pentopyranos-4-ulose + CO2 + NADH. The enzyme catalyses UDP-4-amino-4-deoxy-beta-L-arabinose + (6R)-10-formyltetrahydrofolate = UDP-4-deoxy-4-formamido-beta-L-arabinose + (6S)-5,6,7,8-tetrahydrofolate + H(+). It functions in the pathway nucleotide-sugar biosynthesis; UDP-4-deoxy-4-formamido-beta-L-arabinose biosynthesis; UDP-4-deoxy-4-formamido-beta-L-arabinose from UDP-alpha-D-glucuronate: step 1/3. Its pathway is nucleotide-sugar biosynthesis; UDP-4-deoxy-4-formamido-beta-L-arabinose biosynthesis; UDP-4-deoxy-4-formamido-beta-L-arabinose from UDP-alpha-D-glucuronate: step 3/3. It participates in bacterial outer membrane biogenesis; lipopolysaccharide biosynthesis. Its function is as follows. Bifunctional enzyme that catalyzes the oxidative decarboxylation of UDP-glucuronic acid (UDP-GlcUA) to UDP-4-keto-arabinose (UDP-Ara4O) and the addition of a formyl group to UDP-4-amino-4-deoxy-L-arabinose (UDP-L-Ara4N) to form UDP-L-4-formamido-arabinose (UDP-L-Ara4FN). The modified arabinose is attached to lipid A and is required for resistance to polymyxin and cationic antimicrobial peptides. The chain is Bifunctional polymyxin resistance protein ArnA from Pseudomonas fluorescens (strain SBW25).